Consider the following 117-residue polypeptide: Holo-[acyl-carrier-protein] synthase (117 aa).

The Mg(2+) site is built by aspartate 6 and glutamate 55.

The protein belongs to the P-Pant transferase superfamily. AcpS family. The cofactor is Mg(2+).

The protein localises to the cytoplasm. It catalyses the reaction apo-[ACP] + CoA = holo-[ACP] + adenosine 3',5'-bisphosphate + H(+). In terms of biological role, transfers the 4'-phosphopantetheine moiety from coenzyme A to a Ser of acyl-carrier-protein. The chain is Holo-[acyl-carrier-protein] synthase from Chlorobaculum tepidum (strain ATCC 49652 / DSM 12025 / NBRC 103806 / TLS) (Chlorobium tepidum).